The chain runs to 357 residues: Dynein axonemal assembly factor 10 (357 aa).

WD repeat units lie at residues 63 to 105 (EKAK…VPVY), 115 to 154 (NTIDGVGGLGIGEGAPEIVTGSRDGTVKVWDPRQKDDPVA), 162 to 205 (ENKR…LRWE), 207 to 249 (NIKN…PTKG), 257 to 297 (AHKS…QRSK), and 319 to 357 (LSTQPVSSLDWSPDKRGLCICSSFDQMVRVLIVTKLHKI).

As to quaternary structure, component of the PAQosome complex which is responsible for the biogenesis of several protein complexes and which consists of R2TP complex members RUVBL1, RUVBL2, RPAP3 and PIH1D1, URI complex members PFDN2, PFDN6, PDRG1, UXT and URI1 as well as ASDURF, POLR2E and DNAAF10/WDR92. Interacts with PIH1D1; the interaction associates DNAAF10 with the R2TP complex. Interacts with several dynein axonemal assembly factors.

Its subcellular location is the dynein axonemal particle. Key assembly factor specifically required for the stability of axonemal dynein heavy chains in cytoplasm. This is Dynein axonemal assembly factor 10 (DNAAF10) from Bos taurus (Bovine).